The primary structure comprises 116 residues: Large ribosomal subunit protein bL19 (116 aa).

This sequence belongs to the bacterial ribosomal protein bL19 family.

Its function is as follows. This protein is located at the 30S-50S ribosomal subunit interface and may play a role in the structure and function of the aminoacyl-tRNA binding site. The polypeptide is Large ribosomal subunit protein bL19 (Blochmanniella pennsylvanica (strain BPEN)).